A 345-amino-acid chain; its full sequence is Probable G-protein coupled receptor 139 (345 aa).

The Extracellular segment spans residues 1 to 21 (MEHTHAHLAANSSACGLGFVP). N11 is a glycosylation site (N-linked (GlcNAc...) asparagine). A helical transmembrane segment spans residues 22 to 42 (VVYYSFLLCLGLPANILTVII). The Cytoplasmic segment spans residues 43–57 (LSQLVARRQKSSYNY). The helical transmembrane segment at 58–78 (LLALAAADILVLFFIVFVDFL) threads the bilayer. At 79 to 94 (LEDFILTMQMPLIPDK) the chain is on the extracellular side. Residues 95 to 115 (IIEVLEFSSIHTSIWITVPLT) form a helical membrane-spanning segment. Over 116 to 140 (VDRYIAVCHPLKYHTVSYPARTRKV) the chain is Cytoplasmic. Residues 141 to 161 (ILSVYITCFLTSIPYYWWPNI) traverse the membrane as a helical segment. Residues 162–173 (WTEDYISTSMHH) lie on the Extracellular side of the membrane. Residues 174-194 (VLVWIHCFTVYLVPCSIFFIL) traverse the membrane as a helical segment. The Cytoplasmic segment spans residues 195–220 (NSIIVYKLRRKSNFRLRGYSTGKTTA). A helical transmembrane segment spans residues 221–241 (ILFTITSIFATLWAPRIIMIL). Over 242–260 (YHLYGAPIQNPWLVHIMLD) the chain is Extracellular. The chain crosses the membrane as a helical span at residues 261–281 (VANMLALLNTAINFFLYCFIS). The Cytoplasmic segment spans residues 282–345 (KRFRTMAAAT…KHGKPIKVSP (64 aa)).

This sequence belongs to the G-protein coupled receptor 1 family. Expressed almost exclusively in the brain. Abundantly expressed in the ventrolateral region of caudate putamen, the habenular nucleus, the zona incerta, and the medial mammillary nucleus.

It localises to the cell membrane. Its function is as follows. Orphan receptor. Seems to act through a G(q/11)-mediated pathway. In Mus musculus (Mouse), this protein is Probable G-protein coupled receptor 139 (Gpr139).